The chain runs to 183 residues: MQMDWLFIAVVSAIGLLSSGVPGTQGAYTTEQCRALNGTCRFYACFPKNVVIGKCDWLGWGCCARTPLERCTAKKGTCTASGCTETDTDHGPCDGGAQCCQRDPVKYCKFHGNVCGRGKCPMDHIPIGEQCMPGYPCCKRDGPAYCKSKGGKCLRRCSQIVPTDIIGVCADGVPCCKSRQSTG.

An N-terminal signal peptide occupies residues 1-26; sequence MQMDWLFIAVVSAIGLLSSGVPGTQG. The stretch at 27-64 is one C(6)C(4)C(9)C(6)CC 1; approximate repeat; the sequence is AYTTEQCRALNGTCRFYACFPKNVVIGKCDWLGWGCCA. One copy of the C(6)C(4)C(9)C(6)CC 2; approximate repeat lies at 65–101; the sequence is RTPLERCTAKKGTCTASGCTETDTDHGPCDGGAQCCQ. A C(6)C(4)C(9)C(6)CC 3; approximate repeat occupies 102 to 139; the sequence is RDPVKYCKFHGNVCGRGKCPMDHIPIGEQCMPGYPCCK. One copy of the C(6)C(4)C(9)C(6)CC 4; approximate repeat lies at 140-177; sequence RDGPAYCKSKGGKCLRRCSQIVPTDIIGVCADGVPCCK.

It belongs to the beta-defensin family. Helofensin subfamily. As to expression, expressed by the mandibular venom gland.

Its subcellular location is the secreted. Functionally, lethal toxin which possesses an inhibitory effect on direct electrical stimulation of the isolated hemi-diaphragm of mice. Neither hemorrhagic nor hemolytic activities are detected. Phospholipase A2 activity, proteolytic activity and arginine esterolytic activity are absent. The protein is Helofensin-1 of Heloderma suspectum cinctum (Banded Gila monster).